A 291-amino-acid polypeptide reads, in one-letter code: GTPase Era (291 aa).

Residues 2-167 (KSGFVSIIGR…LDEIVKYLDK (166 aa)) enclose the Era-type G domain. Positions 10–17 (GRTNAGKS) are G1. Residue 10 to 17 (GRTNAGKS) participates in GTP binding. A G2 region spans residues 36 to 40 (NATRR). The segment at 57-60 (DTPG) is G3. GTP-binding positions include 57 to 61 (DTPGL) and 116 to 119 (NKVD). Positions 116-119 (NKVD) are G4. Positions 146-148 (YSS) are G5. In terms of domain architecture, KH type-2 spans 186-274 (YRDFILESIY…LLKLFVTVKK (89 aa)).

This sequence belongs to the TRAFAC class TrmE-Era-EngA-EngB-Septin-like GTPase superfamily. Era GTPase family. As to quaternary structure, monomer.

The protein resides in the cytoplasm. The protein localises to the cell inner membrane. In terms of biological role, an essential GTPase that binds both GDP and GTP, with rapid nucleotide exchange. Plays a role in 16S rRNA processing and 30S ribosomal subunit biogenesis and possibly also in cell cycle regulation and energy metabolism. In Campylobacter jejuni subsp. jejuni serotype O:6 (strain 81116 / NCTC 11828), this protein is GTPase Era.